The primary structure comprises 294 residues: Cytidine deaminase (294 aa).

CMP/dCMP-type deaminase domains are found at residues 48–168 and 186–294; these read DEDA…FGPK and LTGD…VLLG. 89 to 91 provides a ligand contact to substrate; it reads NME. H102 contacts Zn(2+). Catalysis depends on E104, which acts as the Proton donor. Zn(2+)-binding residues include C129 and C132.

Belongs to the cytidine and deoxycytidylate deaminase family. Homodimer. Requires Zn(2+) as cofactor.

It catalyses the reaction cytidine + H2O + H(+) = uridine + NH4(+). The enzyme catalyses 2'-deoxycytidine + H2O + H(+) = 2'-deoxyuridine + NH4(+). Its function is as follows. This enzyme scavenges exogenous and endogenous cytidine and 2'-deoxycytidine for UMP synthesis. The sequence is that of Cytidine deaminase from Salmonella arizonae (strain ATCC BAA-731 / CDC346-86 / RSK2980).